Here is a 1008-residue protein sequence, read N- to C-terminus: MVKKKIDNRIRVMIENGVKLGHRTMFIVIGDKARDQVPILYDILTKSTVKARPTVLWCYKNKDEAISNHGKKRAKKIAVGKVDVNEADLFDSFRVATTIHGRYYSETHAVLGRTYGVCVLQDFEALTPNLLARTVETVEGGGLIILLLKTLQSLKQLYTMSMDVHKRFRTEAHQTVTCRFNERLILSLADCKRCLVVNDDLTVLPLSSKTINVEPVNPAGAGRSPNEASLKELKESLLTVQPAGALVNLCKTYDQANAVAQFIEALVDKQLKPPMSLTAARGRGKSAALGLSIAAAVAFGYVNIYVTSPHPENLITLFEFVLKGFDALEYQEHADYTIIRSTNADYKKAIIRINITRSSRQTIQYIAPSDTHLLNAADLLLIDEAAAIPLPLVKKMIGPYLVFMASTINGYEGTGRSLSLKLISQLQKDNNARPPLKLEESIRYQENDDIEKWLINLLCLDASTVPSISSGCPTPDACELYYVDRDALFSYHKAAEAFLHRLVSIYVSSHYKNTPNDLQMMSDAPAHHLFCLLGPVQRMDALPEILVVIQVALEGQISAQSISDSLGRGKKAAGDLIPWNVAEQYGDRDFPKLCGVRIVRVATHPNYQRMGYGKRAIQLLKDYYARKHTNLEDGPVASKDAGKGIEEVEEEELSLLKEQIRPRSRIPTLLQRLHERVPEHVDYIGTSYGLTTELLKFWKNAGFVPVYLSQKSNELTAEHSCIMLHTPNATPWLGLYYQDFRRRVLKLMGKTFREFETKLCLALLKNKSVDTEGSALKVLDKPMLDVYFLPHDLQRLESYARQQSEFRLIIDLLTDIAQLYFQGRIDGLQLDLVQQGILLALGVQGKTVDALGLELNMPGNQLLAKFFDAMKRCNQCFRSVLEEHIEGGMLREADLSKGEELQPLTLSLDKELDQTAQKLSKQQRKELKRLKAEQLDEFQIKGTEEDWSKALETNGTGGGSGLLSVKSGVKRLDGPIETREDGDLAAPLSKKKKKNNPKQRRSQGKSLI.

ATP-binding positions include 282–291 (GRGKSAALGL) and arginine 443. An N-acetyltransferase domain is found at 531 to 713 (CLLGPVQRMD…VPVYLSQKSN (183 aa)). Acetyl-CoA contacts are provided by residues 601–603 (VAT), 608–614 (QRMGYGK), and asparagine 700. Serine 907 carries the post-translational modification Phosphoserine. The interval 950–1008 (ALETNGTGGGSGLLSVKSGVKRLDGPIETREDGDLAAPLSKKKKKNNPKQRRSQGKSLI) is disordered. The span at 970–982 (KRLDGPIETREDG) shows a compositional bias: basic and acidic residues. The span at 989–1008 (SKKKKKNNPKQRRSQGKSLI) shows a compositional bias: basic residues.

The protein belongs to the RNA cytidine acetyltransferase family. NAT10 subfamily. In terms of assembly, component of the PRC1 complex (PSC, PC, PH and dRING1) in 0-12 hours Drosophila embryos. This complex is distinct from the Esc/E(z) complex, which contains many other PcG proteins like Esc, E(z), Su(z)12, HDAC1/Rpd3, Caf1-55 and probably Pho. The two complexes however cooperate and interact together during the first 3 hours of development to establish PcG silencing. Part of the small subunit (SSU) processome, composed of more than 70 proteins and the RNA chaperone small nucleolar RNA (snoRNA) U3.

Its subcellular location is the nucleus. It is found in the nucleolus. It catalyses the reaction a cytidine in 18S rRNA + acetyl-CoA + ATP + H2O = an N(4)-acetylcytidine in 18S rRNA + ADP + phosphate + CoA + H(+). It carries out the reaction a cytidine in tRNA + acetyl-CoA + ATP + H2O = an N(4)-acetylcytidine in tRNA + ADP + phosphate + CoA + H(+). RNA cytidine acetyltransferase with specificity toward both 18S rRNA and tRNAs. Catalyzes the formation of N(4)-acetylcytidine (ac4C) in 18S rRNA. Required for early nucleolar cleavages of precursor rRNA at sites A0, A1 and A2 during 18S rRNA synthesis. Catalyzes the formation of ac4C in serine and leucine tRNAs. Requires a tRNA-binding adapter protein for full tRNA acetyltransferase activity but not for 18S rRNA acetylation. Polycomb group (PcG) protein. PcG proteins act by forming multiprotein complexes, which are required to maintain the transcriptionally repressive state of homeotic genes throughout development. PcG proteins are not required to initiate repression, but to maintain it during later stages of development. They probably act via the methylation of histones, rendering chromatin heritably changed in its expressibility. Part of the small subunit (SSU) processome, first precursor of the small eukaryotic ribosomal subunit. During the assembly of the SSU processome in the nucleolus, many ribosome biogenesis factors, an RNA chaperone and ribosomal proteins associate with the nascent pre-rRNA and work in concert to generate RNA folding, modifications, rearrangements and cleavage as well as targeted degradation of pre-ribosomal RNA by the RNA exosome. The sequence is that of RNA cytidine acetyltransferase (l(1)G0020) from Drosophila melanogaster (Fruit fly).